Consider the following 163-residue polypeptide: Putative pre-16S rRNA nuclease (163 aa).

This sequence belongs to the YqgF nuclease family.

Its subcellular location is the cytoplasm. Functionally, could be a nuclease involved in processing of the 5'-end of pre-16S rRNA. The chain is Putative pre-16S rRNA nuclease from Rhizobium leguminosarum bv. trifolii (strain WSM2304).